Consider the following 372-residue polypeptide: tRNA 2-selenouridine synthase (372 aa).

The Rhodanese domain occupies Phe17 to Glu140. Cys100 acts as the S-selanylcysteine intermediate in catalysis.

This sequence belongs to the SelU family. As to quaternary structure, monomer.

The catalysed reaction is 5-methylaminomethyl-2-thiouridine(34) in tRNA + selenophosphate + (2E)-geranyl diphosphate + H2O + H(+) = 5-methylaminomethyl-2-selenouridine(34) in tRNA + (2E)-thiogeraniol + phosphate + diphosphate. It catalyses the reaction 5-methylaminomethyl-2-thiouridine(34) in tRNA + (2E)-geranyl diphosphate = 5-methylaminomethyl-S-(2E)-geranyl-thiouridine(34) in tRNA + diphosphate. It carries out the reaction 5-methylaminomethyl-S-(2E)-geranyl-thiouridine(34) in tRNA + selenophosphate + H(+) = 5-methylaminomethyl-2-(Se-phospho)selenouridine(34) in tRNA + (2E)-thiogeraniol. The enzyme catalyses 5-methylaminomethyl-2-(Se-phospho)selenouridine(34) in tRNA + H2O = 5-methylaminomethyl-2-selenouridine(34) in tRNA + phosphate. Functionally, involved in the post-transcriptional modification of the uridine at the wobble position (U34) of tRNA(Lys), tRNA(Glu) and tRNA(Gln). Catalyzes the conversion of 2-thiouridine (S2U-RNA) to 2-selenouridine (Se2U-RNA). Acts in a two-step process involving geranylation of 2-thiouridine (S2U) to S-geranyl-2-thiouridine (geS2U) and subsequent selenation of the latter derivative to 2-selenouridine (Se2U) in the tRNA chain. This is tRNA 2-selenouridine synthase from Serratia proteamaculans (strain 568).